Here is a 518-residue protein sequence, read N- to C-terminus: GMP synthase [glutamine-hydrolyzing] (518 aa).

Positions 11–203 (SILVLDFGSQ…AFDVCQAEAN (193 aa)) constitute a Glutamine amidotransferase type-1 domain. Residue C88 is the Nucleophile of the active site. Active-site residues include H177 and E179. The 190-residue stretch at 204–393 (WSMDDFIDMQ…LGMPSDLVWR (190 aa)) folds into the GMPS ATP-PPase domain. 231-237 (SGGVDSS) is a binding site for ATP.

In terms of assembly, homodimer.

The enzyme catalyses XMP + L-glutamine + ATP + H2O = GMP + L-glutamate + AMP + diphosphate + 2 H(+). It functions in the pathway purine metabolism; GMP biosynthesis; GMP from XMP (L-Gln route): step 1/1. Catalyzes the synthesis of GMP from XMP. In Lactiplantibacillus plantarum (strain ATCC BAA-793 / NCIMB 8826 / WCFS1) (Lactobacillus plantarum), this protein is GMP synthase [glutamine-hydrolyzing].